The chain runs to 524 residues: MAEGGGGARRRAPALLEAARARYESLHISDDVFGESGPDSGGNPFYSTSAASRSSSAASSDDEREPPGPPGAAPPPPRAPDAQEPEEDEAGAGWSAALRDRPPPRFEDTGGPTRKMPPSASAVDFFQLFVPDNVLKNMVVQTNMYAKKFQERFGSDGAWVEVTLTEMKAFLGYMISTSISHCESVLSIWSGGFYSNRSLALVMSQARFEKILKYFHVVAFRSSQTTHGLYKVQPFLDSLQNSFDSAFRPSQTQVLHEPLIDEDPVFIATCTERELRKRKKRKFSLWVRQCSSTGFIIQIYVHLKEGGGPDGLDALKNKPQLHSMVARSLCRNAAGKNYIIFTGPSITSLTLFEEFEKQGIYCCGLLRARKSDCTGLPLSMLTNPATPPARGQYQIKMKGNMSLICWYNKGHFRFLTNAYSPVQQGVIIKRKSGEIPCPLAVEAFAAHLSYICRYDDKYSKYFISHKPNKTWQQVFWFAISIAINNAYILYKMSDAYHVKRYSRAQFGERLVRELLGLEDASPTH.

The segment at 30–117 (DDVFGESGPD…DTGGPTRKMP (88 aa)) is disordered. Over residues 47 to 59 (STSAASRSSSAAS) the composition is skewed to low complexity. A compositionally biased stretch (pro residues) spans 67-79 (PGPPGAAPPPPRA). The span at 98-108 (LRDRPPPRFED) shows a compositional bias: basic and acidic residues. A Phosphoserine modification is found at Ser-521.

The protein localises to the nucleus. Transposase that mediates sequence-specific genomic rearrangements. Can induce genomic rearrangements that inactivate the HPRT1 gene. This chain is PiggyBac transposable element-derived protein 5 (PGBD5), found in Homo sapiens (Human).